The sequence spans 82 residues: uncharacterized protein (82 aa).

This is an uncharacterized protein from Ictalurid herpesvirus 1 (strain Auburn) (IcHV-1).